The chain runs to 466 residues: Phosphoenolpyruvate carboxykinase (ATP) (466 aa).

Substrate is bound by residues Arg61, Tyr196, and Lys202. Residues Lys202, His221, and 237-245 (GLSGTGKTT) each bind ATP. Residues Lys202 and His221 each coordinate Mn(2+). Mn(2+) is bound at residue Asp258. Glu286, Arg323, and Thr448 together coordinate ATP. Arg323 serves as a coordination point for substrate.

Belongs to the phosphoenolpyruvate carboxykinase (ATP) family. The cofactor is Mn(2+).

It localises to the cytoplasm. The enzyme catalyses oxaloacetate + ATP = phosphoenolpyruvate + ADP + CO2. It functions in the pathway carbohydrate biosynthesis; gluconeogenesis. Its function is as follows. Involved in the gluconeogenesis. Catalyzes the conversion of oxaloacetate (OAA) to phosphoenolpyruvate (PEP) through direct phosphoryl transfer between the nucleoside triphosphate and OAA. The polypeptide is Phosphoenolpyruvate carboxykinase (ATP) (Deinococcus radiodurans (strain ATCC 13939 / DSM 20539 / JCM 16871 / CCUG 27074 / LMG 4051 / NBRC 15346 / NCIMB 9279 / VKM B-1422 / R1)).